A 384-amino-acid chain; its full sequence is 1-deoxy-D-xylulose 5-phosphate reductoisomerase (384 aa).

Residues Thr-10, Gly-11, Ser-12, Ile-13, Arg-37, Asn-38, and Asn-124 each contribute to the NADPH site. Lys-125 is a 1-deoxy-D-xylulose 5-phosphate binding site. Position 126 (Glu-126) interacts with NADPH. Asp-150 serves as a coordination point for Mn(2+). 4 residues coordinate 1-deoxy-D-xylulose 5-phosphate: Ser-151, Glu-152, Ser-176, and His-199. Glu-152 provides a ligand contact to Mn(2+). Gly-205 is a binding site for NADPH. The 1-deoxy-D-xylulose 5-phosphate site is built by Ser-212, Asn-217, Lys-218, and Glu-221. Position 221 (Glu-221) interacts with Mn(2+).

It belongs to the DXR family. The cofactor is Mg(2+). It depends on Mn(2+) as a cofactor.

The catalysed reaction is 2-C-methyl-D-erythritol 4-phosphate + NADP(+) = 1-deoxy-D-xylulose 5-phosphate + NADPH + H(+). It participates in isoprenoid biosynthesis; isopentenyl diphosphate biosynthesis via DXP pathway; isopentenyl diphosphate from 1-deoxy-D-xylulose 5-phosphate: step 1/6. In terms of biological role, catalyzes the NADPH-dependent rearrangement and reduction of 1-deoxy-D-xylulose-5-phosphate (DXP) to 2-C-methyl-D-erythritol 4-phosphate (MEP). The polypeptide is 1-deoxy-D-xylulose 5-phosphate reductoisomerase (Clostridium perfringens (strain SM101 / Type A)).